The following is a 434-amino-acid chain: [Arg8]-vasotocin receptor (434 aa).

At 1 to 27 (MGRIANQTTASNDTDPFGRNEEVAKME) the chain is on the extracellular side. N-linked (GlcNAc...) asparagine glycans are attached at residues N6 and N12. Residues 28–48 (ITVLSVTFFVAVIGNLSVLLA) form a helical membrane-spanning segment. Residues 49 to 67 (MHNTKKKSSRMHLFIKHLS) are Cytoplasmic-facing. Residues 68-88 (LADMVVAFFQVLPQLCWEITF) traverse the membrane as a helical segment. The Extracellular segment spans residues 89-98 (RFYGPDFLCR). Cysteines 97 and 176 form a disulfide. A helical transmembrane segment spans residues 99-119 (IVKHLQVLGMFASTYMMVMMT). The Cytoplasmic portion of the chain corresponds to 120-141 (LDRYIAICHPLKTLQQPTQRAY). Residues 142–162 (IMIGSTWLCSLLLSTPQYFIF) form a helical membrane-spanning segment. The Extracellular portion of the chain corresponds to 163 to 191 (SLSEIQNGSYVYDCWGHFIEPWGIRAYIT). A helical transmembrane segment spans residues 192–212 (WITVGIFLIPVIILMICYGFI). At 213–257 (CHSIWKNIKCKTMRGTRNTKDGMIGKVSVSSVTIISRAKLRTVKM) the chain is on the cytoplasmic side. Residues 258 to 278 (TLVIVLAYIVCWAPFFIVQMW) traverse the membrane as a helical segment. Residues 279 to 295 (SVWDENFSWDDSENAAV) lie on the Extracellular side of the membrane. The helical transmembrane segment at 296 to 316 (TLSALLASLNSCCNPWIYMLF) threads the bilayer. Over 317–434 (SGHLLYDFLR…KSSQCMSKES (118 aa)) the chain is Cytoplasmic.

Belongs to the G-protein coupled receptor 1 family. Vasopressin/oxytocin receptor subfamily. Expressed in pituitary, liver, gills, swim bladder and lateral line.

The protein resides in the cell membrane. Functionally, binds to vasotocin. Produces an induction of membrane chloride currents indicating that it is coupled to the inositol phosphate/calcium pathway. This is [Arg8]-vasotocin receptor from Catostomus commersonii (White sucker).